A 210-amino-acid polypeptide reads, in one-letter code: FMN-dependent NADH:quinone oxidoreductase (210 aa).

FMN contacts are provided by residues S9 and 15 to 17; that span reads SHS.

Belongs to the azoreductase type 1 family. As to quaternary structure, homodimer. FMN is required as a cofactor.

The enzyme catalyses 2 a quinone + NADH + H(+) = 2 a 1,4-benzosemiquinone + NAD(+). It carries out the reaction N,N-dimethyl-1,4-phenylenediamine + anthranilate + 2 NAD(+) = 2-(4-dimethylaminophenyl)diazenylbenzoate + 2 NADH + 2 H(+). Functionally, quinone reductase that provides resistance to thiol-specific stress caused by electrophilic quinones. Also exhibits azoreductase activity. Catalyzes the reductive cleavage of the azo bond in aromatic azo compounds to the corresponding amines. The chain is FMN-dependent NADH:quinone oxidoreductase from Mesorhizobium japonicum (strain LMG 29417 / CECT 9101 / MAFF 303099) (Mesorhizobium loti (strain MAFF 303099)).